Consider the following 289-residue polypeptide: Mas-related G-protein coupled receptor member G (289 aa).

The Extracellular portion of the chain corresponds to 1–13 (MFSIFNIWGTFNK). A helical transmembrane segment spans residues 14 to 34 (VLFFLSLTVSLAGLVGNALLL). At 35 to 52 (WHLGLHIKKGPFNTYLLH) the chain is on the cytoplasmic side. The helical transmembrane segment at 53 to 73 (LAAADFLFLSCQVGFSIATIV) threads the bilayer. Topologically, residues 74–78 (SGHED) are extracellular. A helical membrane pass occupies residues 79-99 (TLYFPVTFLWFAVGLWLLAAF). The Cytoplasmic portion of the chain corresponds to 100 to 120 (SVDCCLAYMFPSFCSPNRRPR). A helical membrane pass occupies residues 121-141 (FTSVVLCLVIWALTMPAVLLP). Residues 142-164 (ANACGLLKNGMSLLVCLKYHWTS) are Extracellular-facing. Residues 165–185 (VTWLAVLSGMACGASKFLLIF) traverse the membrane as a helical segment. Residues 186 to 199 (GNCCSSQPPPKFCK) are Cytoplasmic-facing. Residues 200 to 220 (LAQCSGILLFFCRLPLVVYWC) traverse the membrane as a helical segment. Over 221–222 (LR) the chain is Extracellular. A helical membrane pass occupies residues 223–243 (PVLKFLLPFFFPLATLLACID). Residues 244–289 (SSAKPLLYYMKGRQLRKDPLQVALNRALGEESQSGLGGLSLPMHQV) lie on the Cytoplasmic side of the membrane.

This sequence belongs to the G-protein coupled receptor 1 family. Mas subfamily.

It is found in the cell membrane. Functionally, orphan receptor. May regulate nociceptor function and/or development, including the sensation or modulation of pain. The chain is Mas-related G-protein coupled receptor member G (Mrgprg) from Mus musculus (Mouse).